The primary structure comprises 401 residues: F-box protein At2g43440 (401 aa).

One can recognise an F-box domain in the interval 7–53 (NTNSIYIVPELLEDIFLRLPLKSILKFKTVSRQWRSILESKLFVERR).

This Arabidopsis thaliana (Mouse-ear cress) protein is F-box protein At2g43440.